The sequence spans 503 residues: ATP synthase subunit alpha (503 aa).

ATP is bound at residue 169–176 (GDRKTGKT).

It belongs to the ATPase alpha/beta chains family. F-type ATPases have 2 components, CF(1) - the catalytic core - and CF(0) - the membrane proton channel. CF(1) has five subunits: alpha(3), beta(3), gamma(1), delta(1), epsilon(1). CF(0) has three main subunits: a(1), b(2) and c(9-12). The alpha and beta chains form an alternating ring which encloses part of the gamma chain. CF(1) is attached to CF(0) by a central stalk formed by the gamma and epsilon chains, while a peripheral stalk is formed by the delta and b chains.

It localises to the cell membrane. The enzyme catalyses ATP + H2O + 4 H(+)(in) = ADP + phosphate + 5 H(+)(out). Produces ATP from ADP in the presence of a proton gradient across the membrane. The alpha chain is a regulatory subunit. The polypeptide is ATP synthase subunit alpha (Lactobacillus johnsonii (strain CNCM I-12250 / La1 / NCC 533)).